We begin with the raw amino-acid sequence, 386 residues long: bHLH transcription factor RHL1 (386 aa).

Residues 119-186 are disordered; sequence FTGSLNGTQP…RRGQATDPHS (68 aa). The span at 127–137 shows a compositional bias: low complexity; that stretch reads QPQQHFQHPPQ. Residues 138–151 are compositionally biased toward polar residues; that stretch reads GNSNQIQGQNFGAT. The basic motif; degenerate stretch occupies residues 180–193; that stretch reads QATDPHSIAERLRR. Residues 180–229 enclose the bHLH domain; it reads QATDPHSIAERLRRERIAERMKALQELVPNANKTDKASMLDEIIDYVKFL. Positions 194–229 are helix-loop-helix motif; sequence ERIAERMKALQELVPNANKTDKASMLDEIIDYVKFL.

As to expression, expressed in root epidermal cells.

The protein resides in the nucleus. Functionally, transcription factor that regulates the development of root hairs. The sequence is that of bHLH transcription factor RHL1 from Lotus japonicus (Lotus corniculatus var. japonicus).